Reading from the N-terminus, the 389-residue chain is Mannitol-1-phosphate 5-dehydrogenase (389 aa).

5–16 (AIQFGGGNIGRG) lines the NAD(+) pocket. K214 is an active-site residue.

This sequence belongs to the mannitol dehydrogenase family. Monomer.

It carries out the reaction D-mannitol 1-phosphate + NAD(+) = beta-D-fructose 6-phosphate + NADH + H(+). Catalyzes the NAD(H)-dependent interconversion of D-fructose 6-phosphate and D-mannitol 1-phosphate in the mannitol metabolic pathway. This is Mannitol-1-phosphate 5-dehydrogenase from Talaromyces marneffei (strain ATCC 18224 / CBS 334.59 / QM 7333) (Penicillium marneffei).